The sequence spans 301 residues: Cell division control protein 2 homolog 1 (301 aa).

The Protein kinase domain occupies 5–297 (YQRLEKIGEG…AAQALEHPYF (293 aa)). ATP contacts are provided by residues 11-19 (IGEGSYGVV) and Lys34. Ser15 carries the phosphoserine modification. Tyr16 is modified (phosphotyrosine). The active-site Proton acceptor is the Asp127. Phosphothreonine; by CAK is present on Thr160.

The protein belongs to the protein kinase superfamily. CMGC Ser/Thr protein kinase family. CDC2/CDKX subfamily. In terms of assembly, forms a stable but non-covalent complex with a regulatory subunit and with a cyclin.

It carries out the reaction L-seryl-[protein] + ATP = O-phospho-L-seryl-[protein] + ADP + H(+). It catalyses the reaction L-threonyl-[protein] + ATP = O-phospho-L-threonyl-[protein] + ADP + H(+). With respect to regulation, phosphorylation at Ser-15 or Tyr-16 inactivates the enzyme, while phosphorylation at Thr-160 activates it. In terms of biological role, probably involved in the control of the cell cycle. The sequence is that of Cell division control protein 2 homolog 1 (CRK1) from Trypanosoma congolense.